The sequence spans 183 residues: Large ribosomal subunit protein bL25 (183 aa).

Belongs to the bacterial ribosomal protein bL25 family. CTC subfamily. In terms of assembly, part of the 50S ribosomal subunit; part of the 5S rRNA/L5/L18/L25 subcomplex. Contacts the 5S rRNA. Binds to the 5S rRNA independently of L5 and L18.

In terms of biological role, this is one of the proteins that binds to the 5S RNA in the ribosome where it forms part of the central protuberance. The sequence is that of Large ribosomal subunit protein bL25 from Desulfotalea psychrophila (strain LSv54 / DSM 12343).